A 388-amino-acid polypeptide reads, in one-letter code: MGRARRFQWPLLLLWAAAAGPGAGQEVQTENVTVAEGGVAEITCRLHQYDGSIVVIQNPARQTLFFNGTRALKDERFQLEEFSPRRVRIRLSDARLEDEGGYFCQLYTEDTHHQIATLTVLVAPENPVVEVREQAVEGGEVELSCLVPRSRPAATLRWYRDRKELKGVSSSQENGKVWSVASTVRFRVDRKDDGGIIICEAQNQALPSGHSKQTQYVLDVQYSPTARIHASQAVVREGDTLVLTCAVTGNPRPNQIRWNRGNESLPERAEAVGETLTLPGLVSADNGTYTCEASNKHGHARALYVLVVYDPGAVVEAQTSVPYAIVGGILALLVFLIICVLVGMVWCSVRQKGSYLTHEASGLDEQGEAREAFLNGSDGHKRKEEFFI.

Positions 1–20 (MGRARRFQWPLLLLWAAAAG) are cleaved as a signal peptide. An Ig-like V-type domain is found at 21-119 (PGAGQEVQTE…DTHHQIATLT (99 aa)). The Extracellular portion of the chain corresponds to 21–324 (PGAGQEVQTE…VEAQTSVPYA (304 aa)). N31 and N67 each carry an N-linked (GlcNAc...) asparagine glycan. 3 disulfides stabilise this stretch: C44–C104, C145–C199, and C245–C291. Ig-like C2-type domains lie at 124 to 219 (PENP…YVLD) and 224 to 307 (PTAR…YVLV). A glycan (N-linked (GlcNAc...) asparagine) is linked at N286. A helical membrane pass occupies residues 325–345 (IVGGILALLVFLIICVLVGMV). The Cytoplasmic segment spans residues 346–388 (WCSVRQKGSYLTHEASGLDEQGEAREAFLNGSDGHKRKEEFFI). Phosphoserine is present on S361.

This sequence belongs to the nectin family. Monomer and homodimer. In terms of processing, N-glycosylated. In terms of tissue distribution, expressed in brain, prostate, brain, kidney and some other organs.

It localises to the membrane. Its function is as follows. Involved in the cell-cell adhesion. Has calcium- and magnesium-independent cell-cell adhesion activity. May have tumor-suppressor activity. The protein is Cell adhesion molecule 4 (CADM4) of Homo sapiens (Human).